Reading from the N-terminus, the 397-residue chain is Riboflavin biosynthesis protein RibBA (397 aa).

Residues 1–199 (MFHRIEEALE…IEDLIAYRRH (199 aa)) are DHBP synthase. Residues 26 to 27 (RE), aspartate 31, 138 to 142 (RAGHT), and glutamate 162 contribute to the D-ribulose 5-phosphate site. Residue glutamate 27 coordinates Mg(2+). Residue histidine 141 coordinates Mg(2+). Residues 200-397 (HETFVTKEVE…VTKLGHLLNL (198 aa)) are GTP cyclohydrolase II. 250-254 (RVHSE) is a binding site for GTP. Positions 255, 266, and 268 each coordinate Zn(2+). Residues glutamine 271, 293–295 (EGR), and threonine 315 each bind GTP. Aspartate 327 (proton acceptor; for GTP cyclohydrolase activity) is an active-site residue. The Nucleophile; for GTP cyclohydrolase activity role is filled by arginine 329. GTP is bound by residues threonine 350 and lysine 355.

In the N-terminal section; belongs to the DHBP synthase family. The protein in the C-terminal section; belongs to the GTP cyclohydrolase II family. It depends on Mg(2+) as a cofactor. Requires Mn(2+) as cofactor. Zn(2+) serves as cofactor.

It carries out the reaction D-ribulose 5-phosphate = (2S)-2-hydroxy-3-oxobutyl phosphate + formate + H(+). It catalyses the reaction GTP + 4 H2O = 2,5-diamino-6-hydroxy-4-(5-phosphoribosylamino)-pyrimidine + formate + 2 phosphate + 3 H(+). Its pathway is cofactor biosynthesis; riboflavin biosynthesis; 2-hydroxy-3-oxobutyl phosphate from D-ribulose 5-phosphate: step 1/1. It participates in cofactor biosynthesis; riboflavin biosynthesis; 5-amino-6-(D-ribitylamino)uracil from GTP: step 1/4. Functionally, catalyzes the conversion of D-ribulose 5-phosphate to formate and 3,4-dihydroxy-2-butanone 4-phosphate. In terms of biological role, catalyzes the conversion of GTP to 2,5-diamino-6-ribosylamino-4(3H)-pyrimidinone 5'-phosphate (DARP), formate and pyrophosphate. The chain is Riboflavin biosynthesis protein RibBA from Bacillus cytotoxicus (strain DSM 22905 / CIP 110041 / 391-98 / NVH 391-98).